A 270-amino-acid chain; its full sequence is ATP synthase subunit delta (270 aa).

Belongs to the ATPase delta chain family. F-type ATPases have 2 components, F(1) - the catalytic core - and F(0) - the membrane proton channel. F(1) has five subunits: alpha(3), beta(3), gamma(1), delta(1), epsilon(1). F(0) has three main subunits: a(1), b(2) and c(10-14). The alpha and beta chains form an alternating ring which encloses part of the gamma chain. F(1) is attached to F(0) by a central stalk formed by the gamma and epsilon chains, while a peripheral stalk is formed by the delta and b chains.

It localises to the cell membrane. Its function is as follows. F(1)F(0) ATP synthase produces ATP from ADP in the presence of a proton or sodium gradient. F-type ATPases consist of two structural domains, F(1) containing the extramembraneous catalytic core and F(0) containing the membrane proton channel, linked together by a central stalk and a peripheral stalk. During catalysis, ATP synthesis in the catalytic domain of F(1) is coupled via a rotary mechanism of the central stalk subunits to proton translocation. In terms of biological role, this protein is part of the stalk that links CF(0) to CF(1). It either transmits conformational changes from CF(0) to CF(1) or is implicated in proton conduction. The polypeptide is ATP synthase subunit delta (Kocuria rhizophila (strain ATCC 9341 / DSM 348 / NBRC 103217 / DC2201)).